Reading from the N-terminus, the 215-residue chain is Beta-crystallin A3 (215 aa).

Positions 1–30 are N-terminal arm; sequence MGEAAVPPELDTFPAAKMAQTNPLPVPMGP. Beta/gamma crystallin 'Greek key' domains follow at residues 31-70 and 71-117; these read WKIT…KVEC and GAWV…RPVC. Positions 118 to 123 are connecting peptide; the sequence is SANHKE. Beta/gamma crystallin 'Greek key' domains are found at residues 124–165 and 166–214; these read SKIT…KIPC and GAWV…RRIQ.

This sequence belongs to the beta/gamma-crystallin family. Homo/heterodimer, or complexes of higher-order. The structure of beta-crystallin oligomers seems to be stabilized through interactions between the N-terminal arms.

In terms of biological role, crystallins are the dominant structural components of the vertebrate eye lens. In Gallus gallus (Chicken), this protein is Beta-crystallin A3 (CRYBA1).